A 450-amino-acid chain; its full sequence is 3-phosphoshikimate 1-carboxyvinyltransferase (450 aa).

Residues Lys28, Ser29, and Arg33 each contribute to the 3-phosphoshikimate site. Position 28 (Lys28) interacts with phosphoenolpyruvate. 2 residues coordinate phosphoenolpyruvate: Gly100 and Arg128. The 3-phosphoshikimate site is built by Ser173, Gln175, Asp326, and Lys353. Gln175 lines the phosphoenolpyruvate pocket. Asp326 functions as the Proton acceptor in the catalytic mechanism. Arg357 and Arg402 together coordinate phosphoenolpyruvate.

Belongs to the EPSP synthase family. As to quaternary structure, monomer.

The protein resides in the cytoplasm. It catalyses the reaction 3-phosphoshikimate + phosphoenolpyruvate = 5-O-(1-carboxyvinyl)-3-phosphoshikimate + phosphate. The protein operates within metabolic intermediate biosynthesis; chorismate biosynthesis; chorismate from D-erythrose 4-phosphate and phosphoenolpyruvate: step 6/7. Its function is as follows. Catalyzes the transfer of the enolpyruvyl moiety of phosphoenolpyruvate (PEP) to the 5-hydroxyl of shikimate-3-phosphate (S3P) to produce enolpyruvyl shikimate-3-phosphate and inorganic phosphate. The polypeptide is 3-phosphoshikimate 1-carboxyvinyltransferase (Brucella abortus biovar 1 (strain 9-941)).